Reading from the N-terminus, the 408-residue chain is Arylacetamide deacetylase-like 3 (408 aa).

3 helical membrane-spanning segments follow: residues 2-22, 46-66, and 109-129; these read VVLA…GSLL, ILSC…KLGL, and SSIP…IGSL. The Involved in the stabilization of the negatively charged intermediate by the formation of the oxyanion hole motif lies at 120–122; the sequence is HGG. Ser-194 is a catalytic residue. An N-linked (GlcNAc...) asparagine glycan is attached at Asn-321. Active-site residues include Asp-348 and His-378.

Belongs to the 'GDXG' lipolytic enzyme family.

The protein localises to the membrane. The polypeptide is Arylacetamide deacetylase-like 3 (Aadacl3) (Mus musculus (Mouse)).